Here is a 198-residue protein sequence, read N- to C-terminus: Glycerol-3-phosphate acyltransferase (198 aa).

The next 5 helical transmembrane spans lie at 6 to 26, 55 to 75, 83 to 103, 113 to 133, and 154 to 174; these read FLPVALIIGYLFGSIPFGLIL, GLAAGTLLGDALKGTAAVIIS, AAMIAGLGAFLGHLFPVWLKF, IGILIGLFWPGAIFFCLVWLA, and IVLWAFGHTALAALFALLTLL.

This sequence belongs to the PlsY family. Probably interacts with PlsX.

Its subcellular location is the cell inner membrane. The enzyme catalyses an acyl phosphate + sn-glycerol 3-phosphate = a 1-acyl-sn-glycero-3-phosphate + phosphate. It participates in lipid metabolism; phospholipid metabolism. Functionally, catalyzes the transfer of an acyl group from acyl-phosphate (acyl-PO(4)) to glycerol-3-phosphate (G3P) to form lysophosphatidic acid (LPA). This enzyme utilizes acyl-phosphate as fatty acyl donor, but not acyl-CoA or acyl-ACP. The sequence is that of Glycerol-3-phosphate acyltransferase from Bradyrhizobium sp. (strain BTAi1 / ATCC BAA-1182).